The sequence spans 419 residues: L-rhamnose isomerase (419 aa).

Positions 262, 294, and 296 each coordinate Mn(2+).

Belongs to the rhamnose isomerase family. As to quaternary structure, homotetramer. Requires Mn(2+) as cofactor.

The protein resides in the cytoplasm. It catalyses the reaction L-rhamnopyranose = L-rhamnulose. Its pathway is carbohydrate degradation; L-rhamnose degradation; glycerone phosphate from L-rhamnose: step 1/3. Catalyzes the interconversion of L-rhamnose and L-rhamnulose. The sequence is that of L-rhamnose isomerase from Salmonella agona (strain SL483).